The following is a 228-amino-acid chain: Ribose-5-phosphate isomerase A (228 aa).

Residues 27-30 (TGTT), 86-89 (DGAD), and 100-103 (KGMG) each bind substrate. Glutamate 109 (proton acceptor) is an active-site residue. A substrate-binding site is contributed by lysine 127.

It belongs to the ribose 5-phosphate isomerase family. In terms of assembly, homodimer.

It catalyses the reaction aldehydo-D-ribose 5-phosphate = D-ribulose 5-phosphate. It functions in the pathway carbohydrate degradation; pentose phosphate pathway; D-ribose 5-phosphate from D-ribulose 5-phosphate (non-oxidative stage): step 1/1. Functionally, catalyzes the reversible conversion of ribose-5-phosphate to ribulose 5-phosphate. This is Ribose-5-phosphate isomerase A from Borreliella burgdorferi (strain ZS7) (Borrelia burgdorferi).